A 383-amino-acid chain; its full sequence is Homoserine O-succinyltransferase (383 aa).

Residues 51-361 form the AB hydrolase-1 domain; it reads NALLICHALS…ESDFGHDAFL (311 aa). Serine 157 serves as the catalytic Nucleophile. Residue arginine 227 coordinates substrate. Active-site residues include aspartate 324 and histidine 357. Aspartate 358 serves as a coordination point for substrate.

It belongs to the AB hydrolase superfamily. MetX family. In terms of assembly, homodimer.

It is found in the cytoplasm. It carries out the reaction L-homoserine + succinyl-CoA = O-succinyl-L-homoserine + CoA. Its pathway is amino-acid biosynthesis; L-methionine biosynthesis via de novo pathway; O-succinyl-L-homoserine from L-homoserine: step 1/1. In terms of biological role, transfers a succinyl group from succinyl-CoA to L-homoserine, forming succinyl-L-homoserine. In Teredinibacter turnerae (strain ATCC 39867 / T7901), this protein is Homoserine O-succinyltransferase.